Consider the following 373-residue polypeptide: Maltose/maltodextrin import ATP-binding protein MalK (373 aa).

One can recognise an ABC transporter domain in the interval valine 4 to isoleucine 234. Glycine 36 to serine 43 lines the ATP pocket.

The protein belongs to the ABC transporter superfamily. Maltooligosaccharide importer (TC 3.A.1.1.1) family. In terms of assembly, the complex is composed of two ATP-binding proteins (MalK), two transmembrane proteins (MalG and MalK) and a solute-binding protein (MalE).

Its subcellular location is the cell inner membrane. It catalyses the reaction D-maltose(out) + ATP + H2O = D-maltose(in) + ADP + phosphate + H(+). Functionally, part of the ABC transporter complex MalEFGK involved in maltose/maltodextrin import. Responsible for energy coupling to the transport system. The polypeptide is Maltose/maltodextrin import ATP-binding protein MalK (Vibrio cholerae serotype O1 (strain ATCC 39315 / El Tor Inaba N16961)).